The chain runs to 209 residues: Thiamine-phosphate synthase (209 aa).

4-amino-2-methyl-5-(diphosphooxymethyl)pyrimidine contacts are provided by residues 37–41 (QYRDK) and N69. Residues D70 and D89 each contribute to the Mg(2+) site. Position 108 (S108) interacts with 4-amino-2-methyl-5-(diphosphooxymethyl)pyrimidine. 135–137 (SPT) is a 2-[(2R,5Z)-2-carboxy-4-methylthiazol-5(2H)-ylidene]ethyl phosphate binding site. K138 contributes to the 4-amino-2-methyl-5-(diphosphooxymethyl)pyrimidine binding site. 2-[(2R,5Z)-2-carboxy-4-methylthiazol-5(2H)-ylidene]ethyl phosphate contacts are provided by residues G165 and 185–186 (VS).

The protein belongs to the thiamine-phosphate synthase family. The cofactor is Mg(2+).

It carries out the reaction 2-[(2R,5Z)-2-carboxy-4-methylthiazol-5(2H)-ylidene]ethyl phosphate + 4-amino-2-methyl-5-(diphosphooxymethyl)pyrimidine + 2 H(+) = thiamine phosphate + CO2 + diphosphate. The enzyme catalyses 2-(2-carboxy-4-methylthiazol-5-yl)ethyl phosphate + 4-amino-2-methyl-5-(diphosphooxymethyl)pyrimidine + 2 H(+) = thiamine phosphate + CO2 + diphosphate. The catalysed reaction is 4-methyl-5-(2-phosphooxyethyl)-thiazole + 4-amino-2-methyl-5-(diphosphooxymethyl)pyrimidine + H(+) = thiamine phosphate + diphosphate. It functions in the pathway cofactor biosynthesis; thiamine diphosphate biosynthesis; thiamine phosphate from 4-amino-2-methyl-5-diphosphomethylpyrimidine and 4-methyl-5-(2-phosphoethyl)-thiazole: step 1/1. In terms of biological role, condenses 4-methyl-5-(beta-hydroxyethyl)thiazole monophosphate (THZ-P) and 2-methyl-4-amino-5-hydroxymethyl pyrimidine pyrophosphate (HMP-PP) to form thiamine monophosphate (TMP). The protein is Thiamine-phosphate synthase of Halorhodospira halophila (strain DSM 244 / SL1) (Ectothiorhodospira halophila (strain DSM 244 / SL1)).